A 361-amino-acid polypeptide reads, in one-letter code: D-alanine--D-alanine ligase (361 aa).

An ATP-grasp domain is found at 149-353 (KKLMAAEGLP…YEELLDVLVQ (205 aa)). Residue 176 to 231 (KKLLGLPVFVKPARGGSSIGISKVSRWEDLPAAVDLARQHDEKVIVESEIVGPEVE) participates in ATP binding. Mg(2+) contacts are provided by D308, E320, and N322.

This sequence belongs to the D-alanine--D-alanine ligase family. Requires Mg(2+) as cofactor. It depends on Mn(2+) as a cofactor.

It is found in the cytoplasm. It carries out the reaction 2 D-alanine + ATP = D-alanyl-D-alanine + ADP + phosphate + H(+). Its pathway is cell wall biogenesis; peptidoglycan biosynthesis. Its function is as follows. Cell wall formation. The polypeptide is D-alanine--D-alanine ligase (Corynebacterium efficiens (strain DSM 44549 / YS-314 / AJ 12310 / JCM 11189 / NBRC 100395)).